Consider the following 174-residue polypeptide: Flavodoxin (174 aa).

One can recognise a Flavodoxin-like domain in the interval 4–166; it reads IGIFFGSDTG…RIIQWTKKIK (163 aa).

This sequence belongs to the flavodoxin family. It depends on FMN as a cofactor.

In terms of biological role, low-potential electron donor to a number of redox enzymes. The polypeptide is Flavodoxin (fldA) (Buchnera aphidicola subsp. Baizongia pistaciae (strain Bp)).